Consider the following 445-residue polypeptide: Tubulin beta-2A chain (445 aa).

The MREI motif motif lies at 1-4; it reads MREI. Q11 serves as a coordination point for GTP. A Phosphoserine modification is found at S40. The residue at position 58 (K58) is an N6-acetyllysine; alternate. K58 carries the post-translational modification N6-succinyllysine; alternate. Residue K58 forms a Glycyl lysine isopeptide (Lys-Gly) (interchain with G-Cter in ubiquitin); alternate linkage. GTP-binding residues include E69, S138, G142, T143, and G144. E69 contacts Mg(2+). S172 is modified (phosphoserine; by CDK1). GTP contacts are provided by N204 and N226. 2 positions are modified to phosphothreonine: T285 and T290. Residue R318 is modified to Omega-N-methylarginine. A Glycyl lysine isopeptide (Lys-Gly) (interchain with G-Cter in ubiquitin) cross-link involves residue K324. The tract at residues 422–445 is disordered; sequence YQQYQDATADEQGEFEEEEGEDEA. Acidic residues predominate over residues 429–445; that stretch reads TADEQGEFEEEEGEDEA. E438 bears the 5-glutamyl polyglutamate mark.

This sequence belongs to the tubulin family. Interacts with ZNRF1. Part of a complex composed at least of ASH2L, EMSY, HCFC1, HSPA8, CCAR2, MATR3, MKI67, RBBP5, TUBB2A, WDR5 and ZNF335; this complex may have a histone H3-specific methyltransferase activity. Dimer of alpha and beta chains. A typical microtubule is a hollow water-filled tube with an outer diameter of 25 nm and an inner diameter of 15 nM. Alpha-beta heterodimers associate head-to-tail to form protofilaments running lengthwise along the microtubule wall with the beta-tubulin subunit facing the microtubule plus end conferring a structural polarity. Microtubules usually have 13 protofilaments but different protofilament numbers can be found in some organisms and specialized cells. Mg(2+) is required as a cofactor. Post-translationally, some glutamate residues at the C-terminus are polyglutamylated, resulting in polyglutamate chains on the gamma-carboxyl group. Polyglutamylation plays a key role in microtubule severing by spastin (SPAST). SPAST preferentially recognizes and acts on microtubules decorated with short polyglutamate tails: severing activity by SPAST increases as the number of glutamates per tubulin rises from one to eight, but decreases beyond this glutamylation threshold. Glutamylation is also involved in cilia motility. Some glutamate residues at the C-terminus are monoglycylated but not polyglycylated due to the absence of functional TTLL10 in human. Monoglycylation is mainly limited to tubulin incorporated into cilia and flagella axonemes, which is required for their stability and maintenance. Flagella glycylation controls sperm motility. Both polyglutamylation and monoglycylation can coexist on the same protein on adjacent residues, and lowering glycylation levels increases polyglutamylation, and reciprocally. In terms of processing, phosphorylated on Ser-172 by CDK1 during the cell cycle, from metaphase to telophase, but not in interphase. This phosphorylation inhibits tubulin incorporation into microtubules. As to expression, high expression in brain, where it represents 30% of all beta-tubulins.

The protein resides in the cytoplasm. The protein localises to the cytoskeleton. Its function is as follows. Tubulin is the major constituent of microtubules, a cylinder consisting of laterally associated linear protofilaments composed of alpha- and beta-tubulin heterodimers. Microtubules grow by the addition of GTP-tubulin dimers to the microtubule end, where a stabilizing cap forms. Below the cap, tubulin dimers are in GDP-bound state, owing to GTPase activity of alpha-tubulin. In Homo sapiens (Human), this protein is Tubulin beta-2A chain (TUBB2A).